We begin with the raw amino-acid sequence, 264 residues long: Zinc transporter ZupT (264 aa).

The next 5 membrane-spanning stretches (helical) occupy residues 8-28, 36-56, 75-95, 121-141, and 148-168; these read AFILTALAGLSTGIGSLIAFV, FLSVSLGFSAGVMIYVSMIEI, WLTVLAFFGGILLIAIIDKLI, GLMTAIAIGIHNFPEGLATFI, and SIAIPIVIAIAIHNIPEGIAV. Positions 132 and 135 each coordinate Fe(2+). Positions 135 and 160 each coordinate Zn(2+). Residues Asn161, Glu164, and Glu193 each coordinate Fe(2+). Glu164 is a Zn(2+) binding site. The next 3 helical transmembrane spans lie at 197-217, 219-239, and 244-264; these read AIIGWFLLMPIMNNIVYGAIF, AVAGIMVFISLDELLPAAEEY, and LAIYGVISGMLIMAVSLLLFI.

The protein belongs to the ZIP transporter (TC 2.A.5) family. ZupT subfamily.

Its subcellular location is the cell membrane. The catalysed reaction is Zn(2+)(in) = Zn(2+)(out). Mediates zinc uptake. May also transport other divalent cations. This chain is Zinc transporter ZupT, found in Streptococcus mutans serotype c (strain ATCC 700610 / UA159).